Consider the following 40-residue polypeptide: Photosystem II reaction center protein J (40 aa).

The chain crosses the membrane as a helical span at residues 10-30; it reads LWLVGTVAGTLVIGLLGVFFY.

Belongs to the PsbJ family. PSII is composed of 1 copy each of membrane proteins PsbA, PsbB, PsbC, PsbD, PsbE, PsbF, PsbH, PsbI, PsbJ, PsbK, PsbL, PsbM, PsbT, PsbX, PsbY, PsbZ, Psb30/Ycf12, at least 3 peripheral proteins of the oxygen-evolving complex and a large number of cofactors. It forms dimeric complexes.

It localises to the plastid. The protein localises to the chloroplast thylakoid membrane. One of the components of the core complex of photosystem II (PSII). PSII is a light-driven water:plastoquinone oxidoreductase that uses light energy to abstract electrons from H(2)O, generating O(2) and a proton gradient subsequently used for ATP formation. It consists of a core antenna complex that captures photons, and an electron transfer chain that converts photonic excitation into a charge separation. This Adiantum capillus-veneris (Maidenhair fern) protein is Photosystem II reaction center protein J.